A 280-amino-acid chain; its full sequence is Probable cell division protein WhiA (280 aa).

The H-T-H motif DNA-binding region spans 246 to 279 (SLEQIAQFFERKYKVQITRSGIQHLNAKLKKLNQ).

It belongs to the WhiA family.

Functionally, involved in cell division and chromosome segregation. The chain is Probable cell division protein WhiA from Mycoplasma pneumoniae (strain ATCC 29342 / M129 / Subtype 1) (Mycoplasmoides pneumoniae).